The chain runs to 168 residues: Large ribosomal subunit protein uL10 (168 aa).

The protein belongs to the universal ribosomal protein uL10 family. In terms of assembly, part of the ribosomal stalk of the 50S ribosomal subunit. The N-terminus interacts with L11 and the large rRNA to form the base of the stalk. The C-terminus forms an elongated spine to which L12 dimers bind in a sequential fashion forming a multimeric L10(L12)X complex.

Functionally, forms part of the ribosomal stalk, playing a central role in the interaction of the ribosome with GTP-bound translation factors. The protein is Large ribosomal subunit protein uL10 of Acidovorax ebreus (strain TPSY) (Diaphorobacter sp. (strain TPSY)).